A 262-amino-acid polypeptide reads, in one-letter code: Polyamine aminopropyltransferase (262 aa).

A PABS domain is found at M1–P249. N29 provides a ligand contact to S-methyl-5'-thioadenosine. D83 serves as a coordination point for spermidine. The active-site Proton acceptor is the D155.

This sequence belongs to the spermidine/spermine synthase family. Homodimer or homotetramer.

It localises to the cytoplasm. The enzyme catalyses S-adenosyl 3-(methylsulfanyl)propylamine + putrescine = S-methyl-5'-thioadenosine + spermidine + H(+). The protein operates within amine and polyamine biosynthesis; spermidine biosynthesis; spermidine from putrescine: step 1/1. In terms of biological role, catalyzes the irreversible transfer of a propylamine group from the amino donor S-adenosylmethioninamine (decarboxy-AdoMet) to putrescine (1,4-diaminobutane) to yield spermidine. The chain is Polyamine aminopropyltransferase from Helicobacter pylori (strain P12).